The primary structure comprises 629 residues: tRNA uridine 5-carboxymethylaminomethyl modification enzyme MnmG (629 aa).

G13–G18 lines the FAD pocket. G273 to F287 contributes to the NAD(+) binding site.

Belongs to the MnmG family. In terms of assembly, homodimer. Heterotetramer of two MnmE and two MnmG subunits. FAD serves as cofactor.

Its subcellular location is the cytoplasm. In terms of biological role, NAD-binding protein involved in the addition of a carboxymethylaminomethyl (cmnm) group at the wobble position (U34) of certain tRNAs, forming tRNA-cmnm(5)s(2)U34. This Shewanella baltica (strain OS185) protein is tRNA uridine 5-carboxymethylaminomethyl modification enzyme MnmG.